The following is a 234-amino-acid chain: Phosphoribosylaminoimidazole-succinocarboxamide synthase (234 aa).

It belongs to the SAICAR synthetase family.

The enzyme catalyses 5-amino-1-(5-phospho-D-ribosyl)imidazole-4-carboxylate + L-aspartate + ATP = (2S)-2-[5-amino-1-(5-phospho-beta-D-ribosyl)imidazole-4-carboxamido]succinate + ADP + phosphate + 2 H(+). The protein operates within purine metabolism; IMP biosynthesis via de novo pathway; 5-amino-1-(5-phospho-D-ribosyl)imidazole-4-carboxamide from 5-amino-1-(5-phospho-D-ribosyl)imidazole-4-carboxylate: step 1/2. This Sulfurisphaera tokodaii (strain DSM 16993 / JCM 10545 / NBRC 100140 / 7) (Sulfolobus tokodaii) protein is Phosphoribosylaminoimidazole-succinocarboxamide synthase.